Consider the following 845-residue polypeptide: Envelope glycoprotein gp160 (845 aa).

A signal peptide spans 1–28; it reads METQRNYPSLWRWGTLILGMLLICSAAQ. The Extracellular portion of the chain corresponds to 29–673; that stretch reads NLWVTVYYGV…ISHWLWYIKI (645 aa). The cysteines at positions 50 and 70 are disulfide-linked. N-linked (GlcNAc...) asparagine; by host glycans are attached at residues Asn84, Asn126, Asn132, Asn133, Asn136, Asn149, Asn153, Asn179, Asn180, Asn190, Asn223, Asn227, Asn234, Asn255, Asn269, Asn286, Asn294, Asn324, Asn331, and Asn347. Disulfide bonds link Cys115–Cys198, Cys122–Cys189, Cys127–Cys150, Cys211–Cys240, and Cys221–Cys232. Residues 127–149 form a V1 region; that stretch reads CTNVRNNTSNSTSSMEAGGELTN. Residues 150-189 form a V2 region; it reads CSFNVTTVLRDKQQKVHALFYRLDVVPIDNNSTQYRLINC. A V3 region spans residues 289 to 322; it reads CTRPNNNTRTSIHLGPGRAFYATGDIIGDIRQAH. Cys289 and Cys323 are oxidised to a cystine. Residues 355 to 365 are CD4-binding loop; that stretch reads NSGGDMEVRTH. Cystine bridges form between Cys369–Cys434 and Cys376–Cys407. A V4 region spans residues 376–407; it reads CNTSGLFNSSWEMHTNYTSNDTKGNENITLPC. Residues Asn377, Asn383, Asn391, Asn395, Asn402, Asn437, Asn449, and Asn454 are each glycosylated (N-linked (GlcNAc...) asparagine; by host). V5 stretches follow at residues 450 to 460 and 452 to 460; these read ASAENYTFRPG and AENYTFRPG. Residues 501 to 521 are fusion peptide; sequence AVGMGASFLGFLGAAGSTMGA. Residues 563–581 are immunosuppression; it reads KQLQARVLAVERYLRDQQL. A disulfide bond links Cys587 and Cys593. N-linked (GlcNAc...) asparagine; by host glycans are attached at residues Asn600, Asn605, Asn614, and Asn626. Positions 622-656 form a coiled coil; sequence KQISNYTEEIYRLLEVSQTQQEKNEQDLLALDKWA. The tract at residues 651–672 is MPER; binding to GalCer; the sequence is ALDKWASLWTWFDISHWLWYIK. Residues 674–694 form a helical membrane-spanning segment; sequence FIMIVGGLIGLRIIFAVLSIV. The Cytoplasmic segment spans residues 695–845; that stretch reads NRVRQGYSPL…IRQGFERSLL (151 aa). Positions 701 to 704 match the YXXL motif; contains endocytosis signal motif; the sequence is YSPL. The disordered stretch occupies residues 708–731; sequence TLVPNPRGPDRPEGTEEGGGEQDR. A Di-leucine internalization motif motif is present at residues 844–845; that stretch reads LL.

The protein belongs to the HIV-1 env protein family. As to quaternary structure, the mature envelope protein (Env) consists of a homotrimer of non-covalently associated gp120-gp41 heterodimers. The resulting complex protrudes from the virus surface as a spike. There seems to be as few as 10 spikes on the average virion. Interacts with host CD4, CCR5 and CXCR4. Gp120 also interacts with the C-type lectins CD209/DC-SIGN and CLEC4M/DC-SIGNR (collectively referred to as DC-SIGN(R)). Gp120 and gp41 interact with GalCer. Gp120 interacts with host ITGA4/ITGB7 complex; on CD4+ T-cells, this interaction results in rapid activation of integrin ITGAL/LFA-1, which facilitates efficient cell-to-cell spreading of HIV-1. Gp120 interacts with cell-associated heparan sulfate; this interaction increases virus infectivity on permissive cells and may be involved in infection of CD4- cells. In terms of assembly, the mature envelope protein (Env) consists of a homotrimer of non-covalently associated gp120-gp41 heterodimers. The resulting complex protrudes from the virus surface as a spike. There seems to be as few as 10 spikes on the average virion. In terms of processing, highly glycosylated by host. The high number of glycan on the protein is reffered to as 'glycan shield' because it contributes to hide protein sequence from adaptive immune system. Palmitoylation of the transmembrane protein and of Env polyprotein (prior to its proteolytic cleavage) is essential for their association with host cell membrane lipid rafts. Palmitoylation is therefore required for envelope trafficking to classical lipid rafts, but not for viral replication. Post-translationally, specific enzymatic cleavages in vivo yield mature proteins. Envelope glycoproteins are synthesized as an inactive precursor that is heavily N-glycosylated and processed likely by host cell furin in the Golgi to yield the mature SU and TM proteins. The cleavage site between SU and TM requires the minimal sequence [KR]-X-[KR]-R. About 2 of the 9 disulfide bonds of gp41 are reduced by P4HB/PDI, following binding to CD4 receptor.

Its subcellular location is the virion membrane. The protein resides in the host cell membrane. It is found in the host endosome membrane. In terms of biological role, oligomerizes in the host endoplasmic reticulum into predominantly trimers. In a second time, gp160 transits in the host Golgi, where glycosylation is completed. The precursor is then proteolytically cleaved in the trans-Golgi and thereby activated by cellular furin or furin-like proteases to produce gp120 and gp41. Attaches the virus to the host lymphoid cell by binding to the primary receptor CD4. This interaction induces a structural rearrangement creating a high affinity binding site for a chemokine coreceptor like CXCR4 and/or CCR5. Acts as a ligand for CD209/DC-SIGN and CLEC4M/DC-SIGNR, which are respectively found on dendritic cells (DCs), and on endothelial cells of liver sinusoids and lymph node sinuses. These interactions allow capture of viral particles at mucosal surfaces by these cells and subsequent transmission to permissive cells. HIV subverts the migration properties of dendritic cells to gain access to CD4+ T-cells in lymph nodes. Virus transmission to permissive T-cells occurs either in trans (without DCs infection, through viral capture and transmission), or in cis (following DCs productive infection, through the usual CD4-gp120 interaction), thereby inducing a robust infection. In trans infection, bound virions remain infectious over days and it is proposed that they are not degraded, but protected in non-lysosomal acidic organelles within the DCs close to the cell membrane thus contributing to the viral infectious potential during DCs' migration from the periphery to the lymphoid tissues. On arrival at lymphoid tissues, intact virions recycle back to DCs' cell surface allowing virus transmission to CD4+ T-cells. Its function is as follows. Acts as a class I viral fusion protein. Under the current model, the protein has at least 3 conformational states: pre-fusion native state, pre-hairpin intermediate state, and post-fusion hairpin state. During fusion of viral and target intracellular membranes, the coiled coil regions (heptad repeats) assume a trimer-of-hairpins structure, positioning the fusion peptide in close proximity to the C-terminal region of the ectodomain. The formation of this structure appears to drive apposition and subsequent fusion of viral and target cell membranes. Complete fusion occurs in host cell endosomes and is dynamin-dependent, however some lipid transfer might occur at the plasma membrane. The virus undergoes clathrin-dependent internalization long before endosomal fusion, thus minimizing the surface exposure of conserved viral epitopes during fusion and reducing the efficacy of inhibitors targeting these epitopes. Membranes fusion leads to delivery of the nucleocapsid into the cytoplasm. The protein is Envelope glycoprotein gp160 of Homo sapiens (Human).